The primary structure comprises 468 residues: Lysosomal dipeptide transporter MFSD1 (468 aa).

Residues 1 to 25 (MEDEEEEARALLPGGSDEAGRETRA) are disordered. The Dileucine internalization motif signature appears at 11–12 (LL). Transmembrane regions (helical) follow at residues 42–62 (LAHR…SYFC), 86–106 (LLYA…GFLI), 116–136 (TIIF…GGIF), 138–158 (AFWL…SLAV), 173–194 (LNLV…NMNL), 218–238 (LMIG…LAYL), 270–290 (WLIF…IGLV), 307–327 (AINS…GLLV), 334–354 (IIWV…LAFT), 364–384 (LLGL…AFVV), 395–415 (FMQS…GMIL), and 421–441 (LFLE…VVLL).

Belongs to the major facilitator superfamily. In terms of assembly, homodimer. Interacts with lysosomal protein GLMP (via lumenal domain); the interaction starts while both proteins are still in the endoplasmic reticulum and is required for stabilization of MFSD1 in lysosomes but has no direct effect on its targeting to lysosomes or transporter activity.

The protein resides in the lysosome membrane. It carries out the reaction L-alpha-aminoacyl-L-arginine(out) = L-alpha-aminoacyl-L-arginine(in). The catalysed reaction is L-arginyl-L-alpha-amino acid(out) = L-arginyl-L-alpha-amino acid(in). The enzyme catalyses L-arginyl-glycine(out) = L-arginyl-glycine(in). It catalyses the reaction L-alpha-aminoacyl-L-lysine(out) = L-alpha-aminoacyl-L-lysine(in). It carries out the reaction L-aspartyl-L-lysine(out) = L-aspartyl-L-lysine(in). The catalysed reaction is L-alanyl-L-lysine(out) = L-alanyl-L-lysine(in). The enzyme catalyses L-lysyl-L-alpha-amino acid(out) = L-lysyl-L-alpha-amino acid(in). It catalyses the reaction L-lysyl-L-alanine(out) = L-lysyl-L-alanine(in). It carries out the reaction L-lysyl-L-lysine(out) = L-lysyl-L-lysine(in). The catalysed reaction is L-lysyl-glycine(out) = L-lysyl-glycine(in). The enzyme catalyses L-alpha-aminoacyl-L-histidine(out) = L-alpha-aminoacyl-L-histidine(in). It catalyses the reaction L-histidyl-L-alpha-amino acid(out) = L-histidyl-L-alpha-amino acid(in). It carries out the reaction L-histidyl-glycine(out) = L-histidyl-glycine(in). Its function is as follows. Lysosomal dipeptide uniporter that selectively exports lysine, arginine or histidine-containing dipeptides with a net positive charge from the lysosome lumen into the cytosol. Could play a role in a specific type of protein O-glycosylation indirectly regulating macrophages migration and tissue invasion. Also essential for liver homeostasis. The protein is Lysosomal dipeptide transporter MFSD1 of Bos taurus (Bovine).